We begin with the raw amino-acid sequence, 444 residues long: Cysteine proteinase 2 (444 aa).

Positions 1 to 19 (MATSRAALCAVAVVCVVLA) form a signal peptide, or 27. Residues 20–124 (AACAPARAIH…HYRKARADLS (105 aa)) constitute a propeptide, activation peptide. Cysteines 147 and 188 form a disulfide. The active site involves C150. N228 carries an N-linked (GlcNAc...) asparagine glycan. Active-site residues include H289 and N309. N-linked (GlcNAc...) asparagine glycosylation is present at N372.

Belongs to the peptidase C1 family.

The protein localises to the lysosome. Functionally, the cysteine proteinases have a potential role in host-parasite interaction and virulence. The polypeptide is Cysteine proteinase 2 (CYS2) (Leishmania pifanoi).